The chain runs to 173 residues: MRLFLAIDIPENIKEEIAKFQEQFKMKGIKLVEKENLHITVKFLGEVDEEKLKEILNLDLSIQPIKIKLKYIGTFPNSNYIRVIWIGAYNNNLVEIFKEIDEKLSNLGFKKEREYVPHLTIGRVKFIDNKKKLKDRIEKYKDVDFGEFEAKHIKLYKSTLTPNGPIYEVIKEW.

His38 serves as the catalytic Proton donor. 2 consecutive short sequence motifs (HXTX) follow at residues 38 to 41 (HITV) and 118 to 121 (HLTI). Residue His118 is the Proton acceptor of the active site.

It belongs to the 2H phosphoesterase superfamily. ThpR family.

It carries out the reaction a 3'-end 2',3'-cyclophospho-ribonucleotide-RNA + H2O = a 3'-end 2'-phospho-ribonucleotide-RNA + H(+). In terms of biological role, hydrolyzes RNA 2',3'-cyclic phosphodiester to an RNA 2'-phosphomonoester. This chain is RNA 2',3'-cyclic phosphodiesterase, found in Methanocaldococcus jannaschii (strain ATCC 43067 / DSM 2661 / JAL-1 / JCM 10045 / NBRC 100440) (Methanococcus jannaschii).